Here is a 234-residue protein sequence, read N- to C-terminus: Ribonuclease 3 (234 aa).

An RNase III domain is found at 4 to 133 (LLDLEHKLNY…ILGAVYIDSN (130 aa)). E46 contributes to the Mg(2+) binding site. D50 is an active-site residue. Residues D119 and E122 each contribute to the Mg(2+) site. E122 is a catalytic residue. A DRBM domain is found at 160–228 (DFKSILQEYV…AKALCIKLGV (69 aa)).

The protein belongs to the ribonuclease III family. As to quaternary structure, homodimer. Requires Mg(2+) as cofactor.

Its subcellular location is the cytoplasm. It carries out the reaction Endonucleolytic cleavage to 5'-phosphomonoester.. Its function is as follows. Digests double-stranded RNA. Involved in the processing of primary rRNA transcript to yield the immediate precursors to the large and small rRNAs (23S and 16S). Processes some mRNAs, and tRNAs when they are encoded in the rRNA operon. Processes pre-crRNA and tracrRNA of type II CRISPR loci if present in the organism. The polypeptide is Ribonuclease 3 (Fusobacterium nucleatum subsp. nucleatum (strain ATCC 25586 / DSM 15643 / BCRC 10681 / CIP 101130 / JCM 8532 / KCTC 2640 / LMG 13131 / VPI 4355)).